A 116-amino-acid chain; its full sequence is MDKKSSRLRRATRARKKIQELGVHRLVVHRTPRHIYAQVINPEAQVVAAASTVEKSIKEALKSTGNVDAAKAVGKAIAERAVEKGVTVVAFDRSGFKYHGRVAALADAAREAGLQF.

It belongs to the universal ribosomal protein uL18 family. Part of the 50S ribosomal subunit; part of the 5S rRNA/L5/L18/L25 subcomplex. Contacts the 5S and 23S rRNAs.

Its function is as follows. This is one of the proteins that bind and probably mediate the attachment of the 5S RNA into the large ribosomal subunit, where it forms part of the central protuberance. This chain is Large ribosomal subunit protein uL18, found in Shewanella amazonensis (strain ATCC BAA-1098 / SB2B).